The following is a 342-amino-acid chain: Isopentenyl-diphosphate delta-isomerase (342 aa).

11–12 contacts substrate; that stretch reads RK. FMN is bound by residues Ser-68, 69–71, Ser-99, and Asn-127; that span reads SMT. 99–101 is a binding site for substrate; it reads SMR. Gln-162 contacts substrate. Glu-163 is a Mg(2+) binding site. Residues Lys-194, Thr-224, 274-276, and 295-296 each bind FMN; these read GLK and AG.

It belongs to the IPP isomerase type 2 family. Homooctamer. Dimer of tetramers. FMN is required as a cofactor. NADPH serves as cofactor. It depends on Mg(2+) as a cofactor.

Its subcellular location is the cytoplasm. It carries out the reaction isopentenyl diphosphate = dimethylallyl diphosphate. Functionally, involved in the biosynthesis of isoprenoids. Catalyzes the 1,3-allylic rearrangement of the homoallylic substrate isopentenyl (IPP) to its allylic isomer, dimethylallyl diphosphate (DMAPP). The polypeptide is Isopentenyl-diphosphate delta-isomerase (Rickettsia akari (strain Hartford)).